The following is a 174-amino-acid chain: Large ribosomal subunit protein uL5 (174 aa).

The protein belongs to the universal ribosomal protein uL5 family. Part of the 50S ribosomal subunit; contacts the 5S rRNA and probably tRNA. Forms a bridge to the 30S subunit in the 70S ribosome.

Its function is as follows. This is one of the proteins that bind and probably mediate the attachment of the 5S RNA into the large ribosomal subunit, where it forms part of the central protuberance. In the 70S ribosome it contacts protein S13 of the 30S subunit (bridge B1b), connecting the 2 subunits; this bridge is implicated in subunit movement. May contact the P site tRNA; the 5S rRNA and some of its associated proteins might help stabilize positioning of ribosome-bound tRNAs. This chain is Large ribosomal subunit protein uL5, found in Halorubrum lacusprofundi (strain ATCC 49239 / DSM 5036 / JCM 8891 / ACAM 34).